The chain runs to 83 residues: ATP synthase subunit c, chloroplastic (83 aa).

The next 2 membrane-spanning stretches (helical) occupy residues 4–24 and 57–77; these read IISA…AIGP and LAFM…LLFA.

Belongs to the ATPase C chain family. As to quaternary structure, F-type ATPases have 2 components, F(1) - the catalytic core - and F(0) - the membrane proton channel. F(1) has five subunits: alpha(3), beta(3), gamma(1), delta(1), epsilon(1). F(0) has four main subunits: a(1), b(1), b'(1) and c(10-14). The alpha and beta chains form an alternating ring which encloses part of the gamma chain. F(1) is attached to F(0) by a central stalk formed by the gamma and epsilon chains, while a peripheral stalk is formed by the delta, b and b' chains.

It localises to the plastid. Its subcellular location is the chloroplast thylakoid membrane. In terms of biological role, f(1)F(0) ATP synthase produces ATP from ADP in the presence of a proton or sodium gradient. F-type ATPases consist of two structural domains, F(1) containing the extramembraneous catalytic core and F(0) containing the membrane proton channel, linked together by a central stalk and a peripheral stalk. During catalysis, ATP synthesis in the catalytic domain of F(1) is coupled via a rotary mechanism of the central stalk subunits to proton translocation. Key component of the F(0) channel; it plays a direct role in translocation across the membrane. A homomeric c-ring of between 10-14 subunits forms the central stalk rotor element with the F(1) delta and epsilon subunits. This chain is ATP synthase subunit c, chloroplastic, found in Galdieria sulphuraria (Red alga).